A 557-amino-acid polypeptide reads, in one-letter code: Copine-6 (557 aa).

2 C2 domains span residues 1-127 and 134-263; these read MSDP…TKPL and NAGK…MQWD. 5 residues coordinate Ca(2+): D167, D173, D229, D231, and D237. Residues 244 to 303 are linker region; it reads STFQEMQEGTANPGQEMQWDCINPKYRDKKKHYKSSGTVVLAQCTVEKVHTFLDYIMGGC. The region spanning 306 to 526 is the VWFA domain; that stretch reads SFTVAIDFTA…ALAKCVLAEV (221 aa).

Belongs to the copine family. Interacts (via second C2 domain) with OS9 (via C-terminus); this interaction occurs in a calcium-dependent manner in vitro. May interact with NECAB1. The cofactor is Ca(2+).

The protein localises to the cytoplasm. It is found in the cell membrane. It localises to the endosome. The protein resides in the cytoplasmic vesicle. Its subcellular location is the clathrin-coated vesicle. The protein localises to the perikaryon. It is found in the cell projection. It localises to the dendrite. Calcium-dependent phospholipid-binding protein that plays a role in calcium-mediated intracellular processes. Binds phospholipid membranes in a calcium-dependent manner. Plays a role in dendrite formation by melanocytes. This is Copine-6 from Bos taurus (Bovine).